Reading from the N-terminus, the 111-residue chain is Large ribosomal subunit protein uL23 (111 aa).

Belongs to the universal ribosomal protein uL23 family. In terms of assembly, part of the 50S ribosomal subunit. Contacts protein L29, and trigger factor when it is bound to the ribosome.

Its function is as follows. One of the early assembly proteins it binds 23S rRNA. One of the proteins that surrounds the polypeptide exit tunnel on the outside of the ribosome. Forms the main docking site for trigger factor binding to the ribosome. This is Large ribosomal subunit protein uL23 from Chlamydia abortus (strain DSM 27085 / S26/3) (Chlamydophila abortus).